The following is a 225-amino-acid chain: Jeltraxin (225 aa).

The first 19 residues, 1–19 (MKGLVIFFCLFYGCHVAGA), serve as a signal peptide directing secretion. A Pentraxin (PTX) domain is found at 21-223 (GKTIMLFPQK…IVVLRNQFIP (203 aa)). Cysteines 51 and 112 form a disulfide. 2 residues coordinate Ca(2+): Asp-75 and Asn-76. Residue Asn-87 is glycosylated (N-linked (GlcNAc...) asparagine). Ca(2+) is bound by residues Glu-153, Gln-154, Asp-155, and Gln-165. Asn-207 carries N-linked (GlcNAc...) asparagine glycosylation.

Homodecamer consisting of two homopentamer units. Pentraxin (or pentaxin) have a discoid arrangement of 5 non-covalently bound subunits. Ca(2+) is required as a cofactor. Glycosylated. As to expression, oviduct. Highest expression levels were detected in the pars convoluta with lower levels detected in the pars recta. No expression was detected in the pars uterina.

It localises to the secreted. Its function is as follows. Calcium-dependent beta-galactose specific lectin. The sequence is that of Jeltraxin from Lepidobatrachus laevis (Budgett's frog).